The following is a 419-amino-acid chain: GTPase Obg (419 aa).

Positions 1-156 (MFIDKVNTYL…AEVNLELRLI (156 aa)) constitute an Obg domain. Positions 157-325 (ADVGLLGLPN…LLKEMLRMLE (169 aa)) constitute an OBG-type G domain. Residues 163-170 (GLPNAGKS), 188-192 (FTTLA), 209-212 (DIPG), 279-282 (NKID), and 306-308 (SAA) each bind GTP. Mg(2+) is bound by residues Ser-170 and Thr-190. In terms of domain architecture, OCT spans 342–419 (KKYIYEPEFK…IGDFEFTFEK (78 aa)).

It belongs to the TRAFAC class OBG-HflX-like GTPase superfamily. OBG GTPase family. In terms of assembly, monomer. It depends on Mg(2+) as a cofactor.

The protein localises to the cytoplasm. In terms of biological role, an essential GTPase which binds GTP, GDP and possibly (p)ppGpp with moderate affinity, with high nucleotide exchange rates and a fairly low GTP hydrolysis rate. Plays a role in control of the cell cycle, stress response, ribosome biogenesis and in those bacteria that undergo differentiation, in morphogenesis control. In Endomicrobium trichonymphae, this protein is GTPase Obg.